The primary structure comprises 316 residues: Apolipoprotein E (316 aa).

The N-terminal stretch at 1–18 is a signal peptide; that stretch reads MKALWAVLVVTLLAGCLA. Repeat copies occupy residues 76-97, 98-119, 120-141, 142-163, 164-185, 186-207, 208-229, and 230-251. Residues 76 to 251 are 8 X 22 AA approximate tandem repeats; sequence VLMEDTMTEL…RLEEVREQME (176 aa). M139 is subject to Methionine sulfoxide. S143 is modified (phosphoserine). The LDL and other lipoprotein receptors binding stretch occupies residues 154 to 164; the sequence is HLRKLRKRLMR. Position 158–161 (158–161) interacts with heparin; that stretch reads LRKR. Residues 206-286 are lipid-binding and lipoprotein association; the sequence is TANLGAGAGK…GWFEPLVEDM (81 aa). Position 225–232 (225–232) interacts with heparin; the sequence is GARIRGRL. Residues 262 to 316 form a homooligomerization region; sequence QQMRLQAEIFQARLKGWFEPLVEDMQRQWANLVEKIQASVAANPIPPSSVPQESQ. A specificity for association with VLDL region spans residues 274-286; the sequence is RLKGWFEPLVEDM.

This sequence belongs to the apolipoprotein A1/A4/E family. In terms of assembly, homotetramer. May interact with ABCA1; functionally associated with ABCA1 in the biogenesis of HDLs. May interact with APP/A4 amyloid-beta peptide; the interaction is extremely stable in vitro but its physiological significance is unclear. May interact with MAPT. May interact with MAP2. In the cerebrospinal fluid, interacts with secreted SORL1. Interacts with PMEL; this allows the loading of PMEL luminal fragment on ILVs to induce fibril nucleation. Post-translationally, APOE exists as multiple glycosylated and sialylated glycoforms within cells and in plasma. The extent of glycosylation and sialylation are tissue and context specific. In terms of processing, glycated in plasma VLDL. Phosphorylated by FAM20C in the extracellular medium.

It is found in the secreted. Its subcellular location is the extracellular space. The protein localises to the extracellular matrix. It localises to the extracellular vesicle. The protein resides in the endosome. It is found in the multivesicular body. In terms of biological role, APOE is an apolipoprotein, a protein associating with lipid particles, that mainly functions in lipoprotein-mediated lipid transport between organs via the plasma and interstitial fluids. APOE is a core component of plasma lipoproteins and is involved in their production, conversion and clearance. Apolipoproteins are amphipathic molecules that interact both with lipids of the lipoprotein particle core and the aqueous environment of the plasma. As such, APOE associates with chylomicrons, chylomicron remnants, very low density lipoproteins (VLDL) and intermediate density lipoproteins (IDL) but shows a preferential binding to high-density lipoproteins (HDL). It also binds a wide range of cellular receptors including the LDL receptor/LDLR, the LDL receptor-related proteins LRP1, LRP2 and LRP8 and the very low-density lipoprotein receptor/VLDLR that mediate the cellular uptake of the APOE-containing lipoprotein particles. Finally, APOE also has a heparin-binding activity and binds heparan-sulfate proteoglycans on the surface of cells, a property that supports the capture and the receptor-mediated uptake of APOE-containing lipoproteins by cells. A main function of APOE is to mediate lipoprotein clearance through the uptake of chylomicrons, VLDLs, and HDLs by hepatocytes. APOE is also involved in the biosynthesis by the liver of VLDLs as well as their uptake by peripheral tissues ensuring the delivery of triglycerides and energy storage in muscle, heart and adipose tissues. By participating in the lipoprotein-mediated distribution of lipids among tissues, APOE plays a critical role in plasma and tissues lipid homeostasis. APOE is also involved in two steps of reverse cholesterol transport, the HDLs-mediated transport of cholesterol from peripheral tissues to the liver, and thereby plays an important role in cholesterol homeostasis. First, it is functionally associated with ABCA1 in the biogenesis of HDLs in tissues. Second, it is enriched in circulating HDLs and mediates their uptake by hepatocytes. APOE also plays an important role in lipid transport in the central nervous system, regulating neuron survival and sprouting. This chain is Apolipoprotein E (Apoe), found in Onychomys torridus (Southern grasshopper mouse).